The chain runs to 329 residues: Cardiolipin synthase (CMP-forming) (329 aa).

Residues 1–34 (MPPSVATHASLLLKAAAAAAHLHPKPFFSPRAAP) constitute a mitochondrion transit peptide. Positions 27–55 (FFSPRAAPPRIPSAPAPPAAGGSRYRPTT) are disordered. Over residues 32 to 44 (AAPPRIPSAPAPP) the composition is skewed to pro residues. 5 consecutive transmembrane segments (helical) span residues 134–154 (LLTL…LLIS), 156–176 (FYME…AAAV), 194–214 (FGAF…LVLL), 228–248 (PWLL…MSAV), and 298–318 (VTSG…SLVV). Topologically, residues 319–329 (YMRKIWRILLK) are mitochondrial intermembrane.

It belongs to the CDP-alcohol phosphatidyltransferase class-I family. Mn(2+) is required as a cofactor.

It localises to the mitochondrion inner membrane. It catalyses the reaction a CDP-1,2-diacyl-sn-glycerol + a 1,2-diacyl-sn-glycero-3-phospho-(1'-sn-glycerol) = a cardiolipin + CMP + H(+). Functionally, catalyzes the synthesis of cardiolipin (CL) (diphosphatidylglycerol) by specifically transferring a phosphatidyl group from CDP-diacylglycerol to phosphatidylglycerol (PG). CL is a key phospholipid in mitochondrial membranes and plays important roles in maintaining the functional integrity and dynamics of mitochondria under both optimal and stress conditions. This chain is Cardiolipin synthase (CMP-forming), found in Oryza sativa subsp. japonica (Rice).